The following is a 533-amino-acid chain: MTPRRSRVKRRNLRKPKMRFLLVNRFTLLLLLLVSPTPVLQAPTNLTDSGLDQEPFLYLVGRKKLLDAQYKCYDRIHQLPSYEGEGLYCNRTWDGWMCWDDTPAGATAYQHCPDYFPDFDTAEKVSKYCDENGEWFRHPDSNRTWSNYTLCNAFTSEKLQNAYVLYYLALVGHSLSIAALVASMLIFWIFKNLSCQRVTLHKHMFLTYILNSIIIIIHLVEVVPNGDLVRRDPMHIFHHNTHMWTMQWELSPPLPLSAHEGKMDPHASEVISCKVLHFLHQYMMSCNYFWMLCEGIYLHTLIVMAVFTDEQRLRWYYLLGWGFPIVPTIIHAITRALYYNDNCWLSAETHLLYIIHGPVMVALVVNFFFLLNIVRVLVTKMRQTHEAESYMYLKAVKATMVLVPLLGIQFVVFPWRPSNKVLGKIYDYLMHSLIHFQGFFVATIYCFCNHEVQVTLKRQWTQFKIQWSQRWGRRRRPTNRVVSAPRAVAFAEPDGLPIYICHQEPRNPPISNNEGEESTEMIPMNVIQQDASA.

A signal peptide spans 1-41 (MTPRRSRVKRRNLRKPKMRFLLVNRFTLLLLLLVSPTPVLQ). Topologically, residues 42-163 (APTNLTDSGL…FTSEKLQNAY (122 aa)) are extracellular. Residues Asn-45, Asn-90, Asn-142, and Asn-147 are each glycosylated (N-linked (GlcNAc...) asparagine). 3 disulfides stabilise this stretch: Cys-72–Cys-98, Cys-89–Cys-129, and Cys-112–Cys-151. A helical transmembrane segment spans residues 164 to 186 (VLYYLALVGHSLSIAALVASMLI). The Cytoplasmic portion of the chain corresponds to 187–198 (FWIFKNLSCQRV). Residues 199–219 (TLHKHMFLTYILNSIIIIIHL) traverse the membrane as a helical segment. The Extracellular segment spans residues 220–273 (VEVVPNGDLVRRDPMHIFHHNTHMWTMQWELSPPLPLSAHEGKMDPHASEVISC). A disulfide bond links Cys-273 and Cys-343. The chain crosses the membrane as a helical span at residues 274–296 (KVLHFLHQYMMSCNYFWMLCEGI). The Cytoplasmic segment spans residues 297-313 (YLHTLIVMAVFTDEQRL). A helical membrane pass occupies residues 314–334 (RWYYLLGWGFPIVPTIIHAIT). Over 335 to 350 (RALYYNDNCWLSAETH) the chain is Extracellular. Residues 351 to 374 (LLYIIHGPVMVALVVNFFFLLNIV) traverse the membrane as a helical segment. Topologically, residues 375–394 (RVLVTKMRQTHEAESYMYLK) are cytoplasmic. The helical transmembrane segment at 395–413 (AVKATMVLVPLLGIQFVVF) threads the bilayer. At 414-421 (PWRPSNKV) the chain is on the extracellular side. Residues 422–448 (LGKIYDYLMHSLIHFQGFFVATIYCFC) form a helical membrane-spanning segment. Residues 449–533 (NHEVQVTLKR…MNVIQQDASA (85 aa)) lie on the Cytoplasmic side of the membrane.

Belongs to the G-protein coupled receptor 2 family. As to quaternary structure, heterodimer of CALCR and RAMP1, RAMP2 or RAMP3; the receptor complexes function as AMYR1, AMYR2 and AMYR3 receptors, respectively, and respond to amylin/IAPP, calcitonin/CT and CGRP1 ligands. Interacts with GPRASP2.

It localises to the cell membrane. Functionally, g protein-coupled receptor activated by ligand peptides amylin (IAPP), calcitonin (CT/CALCA) and calcitonin gene-related peptide type 1 (CGRP1/CALCA). CALCR interacts with receptor-activity-modifying proteins RAMP1, 2 and 3 to form receptor complexes AMYR1, 2 and 3, respectively. IAPP, CT and CGRP1 activate CALCR and AMYRs with distinct modes of receptor activation resulting in specific phenotypes. Ligand binding causes a conformation change that triggers signaling via guanine nucleotide-binding proteins (G proteins) and modulates the activity of downstream effectors. Activates cAMP-dependent pathway. The chain is Calcitonin receptor from Mus musculus (Mouse).